The primary structure comprises 222 residues: Capsular polysaccharide type 5 biosynthesis protein cap5A (222 aa).

2 helical membrane passes run 20 to 40 (ILII…FFVL) and 172 to 192 (VVNL…YIFF).

It belongs to the CpsC/CapA family.

Its subcellular location is the cell membrane. Its function is as follows. Required for the biosynthesis of type 5 capsular polysaccharide (Cap5/CP5). Might act as the chain-length regulator. This is Capsular polysaccharide type 5 biosynthesis protein cap5A (cap5A) from Staphylococcus aureus (strain Newman).